We begin with the raw amino-acid sequence, 662 residues long: Bifunctional polymyxin resistance protein ArnA (662 aa).

The interval 1–307 is formyltransferase ArnAFT; the sequence is MTSKAVVFAY…ELGLVEGARL (307 aa). His106 serves as the catalytic Proton donor; for formyltransferase activity. Residues Arg116 and 138–142 each bind (6R)-10-formyltetrahydrofolate; that span reads IERAD. A dehydrogenase ArnADH region spans residues 316-662; sequence RRTRVLILGV…EALREREAQA (347 aa). Residues Asp349 and 370–371 contribute to the NAD(+) site; that span reads DI. Residues Ala395, Tyr400, and 434–435 each bind UDP-alpha-D-glucuronate; that span reads TS. The active-site Proton acceptor; for decarboxylase activity is the Glu436. Residues Arg462, Asn493, 527–536, and Tyr614 contribute to the UDP-alpha-D-glucuronate site; that span reads RLVDGGAQKR. Residue Arg620 is the Proton donor; for decarboxylase activity of the active site.

This sequence in the N-terminal section; belongs to the Fmt family. UDP-L-Ara4N formyltransferase subfamily. It in the C-terminal section; belongs to the NAD(P)-dependent epimerase/dehydratase family. UDP-glucuronic acid decarboxylase subfamily. Homohexamer, formed by a dimer of trimers.

The enzyme catalyses UDP-alpha-D-glucuronate + NAD(+) = UDP-beta-L-threo-pentopyranos-4-ulose + CO2 + NADH. It carries out the reaction UDP-4-amino-4-deoxy-beta-L-arabinose + (6R)-10-formyltetrahydrofolate = UDP-4-deoxy-4-formamido-beta-L-arabinose + (6S)-5,6,7,8-tetrahydrofolate + H(+). Its pathway is nucleotide-sugar biosynthesis; UDP-4-deoxy-4-formamido-beta-L-arabinose biosynthesis; UDP-4-deoxy-4-formamido-beta-L-arabinose from UDP-alpha-D-glucuronate: step 1/3. It functions in the pathway nucleotide-sugar biosynthesis; UDP-4-deoxy-4-formamido-beta-L-arabinose biosynthesis; UDP-4-deoxy-4-formamido-beta-L-arabinose from UDP-alpha-D-glucuronate: step 3/3. The protein operates within bacterial outer membrane biogenesis; lipopolysaccharide biosynthesis. Functionally, bifunctional enzyme that catalyzes the oxidative decarboxylation of UDP-glucuronic acid (UDP-GlcUA) to UDP-4-keto-arabinose (UDP-Ara4O) and the addition of a formyl group to UDP-4-amino-4-deoxy-L-arabinose (UDP-L-Ara4N) to form UDP-L-4-formamido-arabinose (UDP-L-Ara4FN). The modified arabinose is attached to lipid A and is required for resistance to polymyxin and cationic antimicrobial peptides. The polypeptide is Bifunctional polymyxin resistance protein ArnA (Pseudomonas aeruginosa (strain LESB58)).